The following is a 338-amino-acid chain: MYSLNWPRAYGIPNSTATFKLCPEDFQVNELFEGQFSGEGEHIVLKIEKKGLTTEQVIKSLARLINKPIKLISYAGLKDKQALTTQWLSIHAPGEVIEGIETLEAPGWKILECTRHNKKLRPGFLSGNHFTITLRNVSDESDLIHRIEQIKFKGVPNYFGEQRFGRDGGNLIKAEEILVQGRKVKDRFLKGMYFSAARSWLYNLILSRRVKESSWNLPLLGDVIQLVGSNSIFVNDKSLDEQLLQRIGEKDVSPASPLPGRSKNLVKGTALQIINEVYAEWSAWLDGLEKNGLEEAWRANILYAEQIEYRINQGTVELSFVLPAGAYATVVLRELVQY.

The active-site Nucleophile is the aspartate 79. A TRUD domain is found at 154–303; it reads GVPNYFGEQR…EEAWRANILY (150 aa).

Belongs to the pseudouridine synthase TruD family.

It catalyses the reaction uridine(13) in tRNA = pseudouridine(13) in tRNA. In terms of biological role, responsible for synthesis of pseudouridine from uracil-13 in transfer RNAs. The sequence is that of tRNA pseudouridine synthase D from Legionella pneumophila (strain Lens).